A 3726-amino-acid chain; its full sequence is Histone-lysine N-methyltransferase trithorax (3726 aa).

Disordered regions lie at residues 1–247 (MGRS…ATTS), 321–352 (QLNS…GVGG), 371–429 (NEVA…TAKQ), and 509–624 (AGAS…RSTR). 2 stretches are compositionally biased toward low complexity: residues 31-53 (PAEP…GSSA) and 71-101 (GGAS…STGS). The segment covering 102–115 (GSSGSGSTNGGSVN) has biased composition (gly residues). Over residues 126–143 (LDKEAVTKDQNGDGDKTR) the composition is skewed to basic and acidic residues. A compositionally biased stretch (low complexity) spans 147 to 205 (SSAPSGKLSAAASGKALSKSSRTFSASTSVTSSGRSSGSSPDGNSGASSDGASSGISCG). The span at 206–215 (KSTAKSTEAS) shows a compositional bias: polar residues. Low complexity predominate over residues 222–247 (TTGAGTCSSAKSSKASSGTTSEATTS). Low complexity-rich tracts occupy residues 384 to 402 (AAAN…GPPA) and 509 to 525 (AGAS…SSSN). Residues 553–586 (PEDQNNAEDDEMDDDDDDEEAEEDDENEDDNDEA) are compositionally biased toward acidic residues. The span at 587-610 (VSEKSAETEKSAGADERDPDEKQL) shows a compositional bias: basic and acidic residues. A DNA-binding region (nuclear receptor) is located at residues 759 to 884 (PSACSICSAV…PGMRGEAAAR (126 aa)). Disordered regions lie at residues 915–937 (TSVK…PNPL), 981–1049 (LTKK…SHGV), 1115–1184 (VPSA…SSAK), and 1208–1231 (DIAT…KEHR). Residues 918–937 (KWKSSGDSTSALTSIKPNPL) are compositionally biased toward polar residues. Positions 986-1000 (SKQEKEKVKESEQSE) are enriched in basic and acidic residues. Over residues 1031 to 1041 (PQTSTTTQPSA) the composition is skewed to low complexity. Basic and acidic residues predominate over residues 1123 to 1132 (SPEKPTHIVT). Composition is skewed to low complexity over residues 1173 to 1183 (GTASAAGGSSA) and 1211 to 1223 (TSSS…NQTQ). PHD-type zinc fingers lie at residues 1266–1347 (RALC…CTVC), 1348–1393 (YTCN…CLKC), and 1421–1482 (GNFC…CARR). A Bromo domain is found at 1496-1663 (AVMEEFKASL…SEQFPWFQNE (168 aa)). The segment at 1573–1592 (FKDQQQQQQQRNANMNKPRV) is disordered. The C2HC pre-PHD-type zinc-finger motif lies at 1734 to 1774 (TRMCLFCRKSGEGLSGEEARLLYCGHDCWVHTNCAMWSAEV). A PHD-type 4 zinc finger spans residues 1795 to 1842 (IKCTVCGNRGATVGCNVRSCGEHYHYPCARSIDCAFLTDKSMYCPAHA). Positions 1884-1941 (RVQFHIGSLEVRQLGAIVPRFSDSYEAVVPINFLCSRLYWSSKEPWKIVEYTVRTTIQ) constitute an FYR N-terminal domain. Disordered regions lie at residues 1991–2019 (GGTD…PQQQ), 2068–2110 (TQAM…WPAS), 2283–2302 (CSPT…QGMT), 2649–2669 (GGGA…LGGT), 2866–2894 (SNLK…IASK), 3029–3096 (QHFS…PTPP), and 3347–3381 (RKEE…IQEP). Positions 2074 to 2087 (NQAQNQNQQAGGAN) are enriched in low complexity. The segment covering 3032–3043 (STSSSSSSSNCS) has biased composition (low complexity). Residues 3044–3057 (LPTNVVNPMQQQAP) are compositionally biased toward polar residues. The FYR C-terminal domain occupies 3386–3470 (GPHLLYEIQS…EKCSKYTPKY (85 aa)). One can recognise an SET domain in the interval 3588–3704 (DYVGVFRSHI…QGEELTYDYK (117 aa)). Histidine 3598 and arginine 3600 together coordinate S-adenosyl-L-methionine. Cysteine 3641 carries the S-methylcysteine; by autocatalysis modification. Residues tyrosine 3642 and 3665–3666 (NH) each bind S-adenosyl-L-methionine. Zn(2+)-binding residues include cysteine 3668, cysteine 3714, cysteine 3716, and cysteine 3721. In terms of domain architecture, Post-SET spans 3710–3726 (EKIPCSCGSKRCRKYLN).

It belongs to the class V-like SAM-binding methyltransferase superfamily. Histone-lysine methyltransferase family. TRX/MLL subfamily. Interacts (via SET domain) with ash1 (via SET domain). Interacts with Nup98. In terms of tissue distribution, maternal isoforms are expressed in syncytial blastoderm, confined to the ventral region fated to become mesoderm. An additional broad domain of expression arises during cellularization and is quickly resolved into four pair-rule-like stripes in the posterior half of the embryo.

It localises to the nucleus. The protein resides in the chromosome. The enzyme catalyses L-lysyl(9)-[histone H3] + 3 S-adenosyl-L-methionine = N(6),N(6),N(6)-trimethyl-L-lysyl(9)-[histone H3] + 3 S-adenosyl-L-homocysteine + 3 H(+). The catalysed reaction is L-cysteinyl-[protein] + S-adenosyl-L-methionine = S-methyl-L-cysteinyl-[protein] + S-adenosyl-L-homocysteine + H(+). Functionally, histone methyltransferase that methylates 'Lys-4' of histone H3 (H3K4me). H3K4me represents a specific tag for epigenetic transcriptional activation. Functions in segment determination through interaction with genes of bithorax (BX-C) and antennapedia (ANT-C) complexes. Acts as an activator of BX-C. Involved in the very early regulation of homeotic genes expressed only in the posterior region of the embryo. Also has auto-methylation activity on Cys-3641. This chain is Histone-lysine N-methyltransferase trithorax, found in Drosophila melanogaster (Fruit fly).